Here is a 454-residue protein sequence, read N- to C-terminus: Bifunctional protein GlmU (454 aa).

The interval 1–228 (MNKCAIILAA…FEETLGVNSR (228 aa)) is pyrophosphorylase. UDP-N-acetyl-alpha-D-glucosamine-binding positions include 8-11 (LAAG), Lys-22, Gln-73, and 78-79 (GT). Asp-103 lines the Mg(2+) pocket. Positions 140, 154, 169, and 226 each coordinate UDP-N-acetyl-alpha-D-glucosamine. Asn-226 is a Mg(2+) binding site. The interval 229–249 (AELAKVESIMRNRINRTHLDN) is linker. The segment at 250 to 454 (GVTIIDPLNT…EGWVERKKLK (205 aa)) is N-acetyltransferase. The UDP-N-acetyl-alpha-D-glucosamine site is built by Arg-331 and Lys-349. His-361 (proton acceptor) is an active-site residue. UDP-N-acetyl-alpha-D-glucosamine is bound by residues Tyr-364 and Asn-375. Acetyl-CoA is bound by residues 384 to 385 (NY), Ala-421, and Arg-438.

In the N-terminal section; belongs to the N-acetylglucosamine-1-phosphate uridyltransferase family. It in the C-terminal section; belongs to the transferase hexapeptide repeat family. In terms of assembly, homotrimer. Requires Mg(2+) as cofactor.

The protein resides in the cytoplasm. The enzyme catalyses alpha-D-glucosamine 1-phosphate + acetyl-CoA = N-acetyl-alpha-D-glucosamine 1-phosphate + CoA + H(+). It catalyses the reaction N-acetyl-alpha-D-glucosamine 1-phosphate + UTP + H(+) = UDP-N-acetyl-alpha-D-glucosamine + diphosphate. The protein operates within nucleotide-sugar biosynthesis; UDP-N-acetyl-alpha-D-glucosamine biosynthesis; N-acetyl-alpha-D-glucosamine 1-phosphate from alpha-D-glucosamine 6-phosphate (route II): step 2/2. Its pathway is nucleotide-sugar biosynthesis; UDP-N-acetyl-alpha-D-glucosamine biosynthesis; UDP-N-acetyl-alpha-D-glucosamine from N-acetyl-alpha-D-glucosamine 1-phosphate: step 1/1. It participates in bacterial outer membrane biogenesis; LPS lipid A biosynthesis. Catalyzes the last two sequential reactions in the de novo biosynthetic pathway for UDP-N-acetylglucosamine (UDP-GlcNAc). The C-terminal domain catalyzes the transfer of acetyl group from acetyl coenzyme A to glucosamine-1-phosphate (GlcN-1-P) to produce N-acetylglucosamine-1-phosphate (GlcNAc-1-P), which is converted into UDP-GlcNAc by the transfer of uridine 5-monophosphate (from uridine 5-triphosphate), a reaction catalyzed by the N-terminal domain. The protein is Bifunctional protein GlmU of Clostridium perfringens (strain SM101 / Type A).